Here is a 427-residue protein sequence, read N- to C-terminus: MSTIRGTLSELSRAADAFAHEVDEAGYGDYTFLPDNSPFDLSFLTSKGLEARGSLIAAAEKILRLAKGPQGCLASFADTKGIEMGTIQALTQLEVPDKVPLQGSITYEELAGVIRVAPELLQRLVRLAALAGFLIEDESGAVRHTAMSAVFLRDTAAGDTARFLFDVDMRAYSFFADSLRLDPSGQNIGDGPTALAFQHDSDDQGNRPTIWDILERNPIQRARFHSTMQALGSFPSHLLKHILVAHDWHSIGSLVDVGGSLGHASLVIAENFPEIRITVQDLPDVVERGRSSLPTVPHAERVSFQAHDLFQEQAIIADAYFLRQILHDWPDGDAERIVRCLIPAMRPGAKLLIMDIVVPEPGAISPYMEKYLRTYDVSMFSMFSAKERTVQQLRDLVERCSARLQFQGISCPPGSATSLLSWVYSAE.

Asp281 contributes to the S-adenosyl-L-methionine binding site. His327 serves as the catalytic Proton acceptor.

Belongs to the class I-like SAM-binding methyltransferase superfamily. Cation-independent O-methyltransferase family. As to quaternary structure, homodimer.

The catalysed reaction is (1S,4S)-4-[(4-hydroxyphenyl)methyl]-2,5-diazaspiro[bicyclo[3.2.1]octane-6,1'-cyclohexan]-4'-one + S-adenosyl-L-methionine = (1S,4S)-4-[(4-methoxyphenyl)methyl]-2,5-diazaspiro[bicyclo[3.2.1]octane-6,1'-cyclohexan]-4'-one + S-adenosyl-L-homocysteine + H(+). The enzyme catalyses (1S,4S)-4-[(4-hydroxyphenyl)methyl]-2-methyl-2,5-diazaspiro[bicyclo[3.2.1]octane-6,1'-cyclohexan]-4'-one + S-adenosyl-L-methionine = (1S,4S)-4-[(4-methoxyphenyl)methyl]-2-methyl-2,5-diazaspiro[bicyclo[3.2.1]octane-6,1'-cyclohexan]-4'-one + S-adenosyl-L-homocysteine + H(+). Its pathway is secondary metabolite biosynthesis. Functionally, O-methyltransferase; part of the gene cluster that mediates the biosynthesis of the alkaloid (-)-FR901483, a potent immunosuppressant that shows efficacy in animal models and a probable inhibitor of purine nucleotide biosynthesis by targeting phosphoribosylpyrophosphate amidotransferase (PPAT). Within the pathway, FrzF methylates the phenolic oxygen at position C4. The biosynthesis of (-)-FR901483 starts with the condensation of two L-tyrosines to yield (S,S)-dityrosyl-piperazine. This process occurs in 3 steps with the non-canonical nonribosomal peptide synthetase FrzA catalyzing the reduction of L-tyrosine into L-tyrosinal, the spontaneous condensation of 2 L-tyrosinal units, and the subsequent reduction by the NmrA-like family domain-containing oxidoreductase FrzB. The cytochrome P450 monooxygenase FrzC then performs coupling between N10 and C1' to morph the piperazine into a 1,4-diazabicyclo[3.2.1]octane spiro-fused to a 2,5-cyclohexadienone. The dienone portion is further reduced to cyclohexanone by the flavin-dependent reductase FrzD. The methyltranserases (MTs) FrzE and FrzF are then involved in the methylation at the C10' amine and the C4 phenolic oxygen, respectively. The order of the two MTs appear to be interchangeable. Cleavage of the C9-N10' bond by the dioxygenase FrzG then leads to formation of a conjugated iminium. In addition to the oxidation of C9, an additional dehydrogenation between C7 and C8 can occur to give a likely shunt product. The next biosynthetic step is the intramolecular aldol condensation catalyzed by the newly identified aldolase FrzH to yield an aza-tricyclic product with the formation of a C9-C3' bond. The short-chain dehydrogenase/reductase FrzI then produces dephospho-(-)-FR901483 that is phosphorylated at C4'-OH into (-)-FR901483 by the phosphotransferase FrzJ. In Cladobotryum sp, this protein is O-methyltransferase FrzF.